A 646-amino-acid polypeptide reads, in one-letter code: Threonine--tRNA ligase (646 aa).

In terms of domain architecture, TGS spans 1–63 (MAQISLTFPD…ETDAKIAIHT (63 aa)). The interval 247 to 544 (DHRKLGREME…LIENYAGKLP (298 aa)) is catalytic. Positions 344, 395, and 521 each coordinate Zn(2+).

It belongs to the class-II aminoacyl-tRNA synthetase family. Homodimer. Zn(2+) is required as a cofactor.

It localises to the cytoplasm. It catalyses the reaction tRNA(Thr) + L-threonine + ATP = L-threonyl-tRNA(Thr) + AMP + diphosphate + H(+). Catalyzes the attachment of threonine to tRNA(Thr) in a two-step reaction: L-threonine is first activated by ATP to form Thr-AMP and then transferred to the acceptor end of tRNA(Thr). Also edits incorrectly charged L-seryl-tRNA(Thr). The protein is Threonine--tRNA ligase of Cereibacter sphaeroides (strain ATCC 17029 / ATH 2.4.9) (Rhodobacter sphaeroides).